We begin with the raw amino-acid sequence, 200 residues long: ATP-dependent Clp protease proteolytic subunit (200 aa).

The Nucleophile role is filled by serine 103. Histidine 128 is an active-site residue.

It belongs to the peptidase S14 family. As to quaternary structure, fourteen ClpP subunits assemble into 2 heptameric rings which stack back to back to give a disk-like structure with a central cavity, resembling the structure of eukaryotic proteasomes.

The protein resides in the cytoplasm. It carries out the reaction Hydrolysis of proteins to small peptides in the presence of ATP and magnesium. alpha-casein is the usual test substrate. In the absence of ATP, only oligopeptides shorter than five residues are hydrolyzed (such as succinyl-Leu-Tyr-|-NHMec, and Leu-Tyr-Leu-|-Tyr-Trp, in which cleavage of the -Tyr-|-Leu- and -Tyr-|-Trp bonds also occurs).. Functionally, cleaves peptides in various proteins in a process that requires ATP hydrolysis. Has a chymotrypsin-like activity. Plays a major role in the degradation of misfolded proteins. This Vibrio parahaemolyticus serotype O3:K6 (strain RIMD 2210633) protein is ATP-dependent Clp protease proteolytic subunit.